The following is a 90-amino-acid chain: MVKNSFISVISQEEKDENKGSVEFQIVSFTNKIRRLTSHFELHRKDYLSQRGLRKILGKRQRLLSYLAKKNRVRYKELISRLDIRESKTR.

This sequence belongs to the universal ribosomal protein uS15 family. As to quaternary structure, part of the 30S ribosomal subunit.

It localises to the plastid. It is found in the chloroplast. The protein is Small ribosomal subunit protein uS15c (rps15) of Manihot esculenta (Cassava).